The sequence spans 295 residues: Pyridoxal 5'-phosphate synthase subunit PdxS (295 aa).

D-ribose 5-phosphate is bound at residue Asp-25. Lys-82 functions as the Schiff-base intermediate with D-ribose 5-phosphate in the catalytic mechanism. Gly-154 contacts D-ribose 5-phosphate. Arg-166 contributes to the D-glyceraldehyde 3-phosphate binding site. Residues Gly-215 and 236-237 (GS) contribute to the D-ribose 5-phosphate site.

It belongs to the PdxS/SNZ family. In terms of assembly, in the presence of PdxT, forms a dodecamer of heterodimers.

The catalysed reaction is aldehydo-D-ribose 5-phosphate + D-glyceraldehyde 3-phosphate + L-glutamine = pyridoxal 5'-phosphate + L-glutamate + phosphate + 3 H2O + H(+). The protein operates within cofactor biosynthesis; pyridoxal 5'-phosphate biosynthesis. Catalyzes the formation of pyridoxal 5'-phosphate from ribose 5-phosphate (RBP), glyceraldehyde 3-phosphate (G3P) and ammonia. The ammonia is provided by the PdxT subunit. Can also use ribulose 5-phosphate and dihydroxyacetone phosphate as substrates, resulting from enzyme-catalyzed isomerization of RBP and G3P, respectively. This Actinobacillus pleuropneumoniae serotype 3 (strain JL03) protein is Pyridoxal 5'-phosphate synthase subunit PdxS.